The following is a 2049-amino-acid chain: Non-reducing polyketide synthase hmp3 (2049 aa).

An N-terminal acylcarrier protein transacylase (SAT) domain region spans residues Leu-9–His-246. The Ketosynthase family 3 (KS3) domain occupies Pro-365 to Asp-793. Active-site for beta-ketoacyl synthase activity residues include Cys-538, His-673, and His-712. Positions Val-887–Leu-1146 are malonyl-CoA:ACP transacylase (MAT) domain. Ser-978 acts as the For acyl/malonyl transferase activity in catalysis. An N-terminal hotdog fold region spans residues Gln-1265–Arg-1404. In terms of domain architecture, PKS/mFAS DH spans Gln-1265–Asp-1573. The segment at Glu-1269 to Leu-1572 is product template (PT) domain. The segment at Gly-1425–Asp-1573 is C-terminal hotdog fold. The Carrier domain occupies Ser-1626–Ser-1704. Ser-1663 carries the O-(pantetheine 4'-phosphoryl)serine modification. Residues Phe-1700–Glu-1747 form a disordered region. Over residues Ser-1703–Ser-1717 the composition is skewed to low complexity. The segment covering Pro-1723–Ala-1732 has biased composition (polar residues). The span at Pro-1733 to Glu-1747 shows a compositional bias: basic and acidic residues. Residues Ser-1761 to Lys-1951 are thioesterase (TE) domain.

The protein operates within secondary metabolite biosynthesis. In terms of biological role, non-reducing polyketide synthase; part of the gene cluster that mediates the biosynthesis of hypothemycin, a resorcylic acid lactone (RAL) that irreversibly inhibits a subset of protein kinases with a conserved cysteine in the ATP binding site such as human ERK2. The first step is performed by both PKSs hmp3 and hmp8 and leads to the production of 7',8'-dehydrozearalenol (DHZ). The highly reducing PKS hpm8 synthesizes the reduced hexaketide (7S,11S,2E,8E)-7,11-dihydroxy-dodeca-2,8-dienoate, which is transferred downstream to the non-reducing PKS hpm3. Hpm3 then extends the reduced hexaketide to a nonaketide, after which regioselective cyclization and macrolactonization affords DHZ. The next step is the conversion of DHZ into aigialomycin C and is performed by the O-methyltransferase hmp5, the FAD-binding monooxygenase hmp7, and the cytochrome P450 monooxygenase hmp1. The wide substrate tolerance of the hmp5 and hmp7 implies that the reactions from DHZ to aigialomycin C can occur in any order. The steps from aigialomycin C to hypothemycin are less well established. The FAD-linked oxidoreductase hmp9 presumably catalyzes oxidation of the C-6' hydroxyl to a ketone. The timing of this oxidation is important, since the resulting enone functional group is a Michael acceptor that can react spontaneously with glutathione, an abundant metabolite in fungal cells. The glutathione S-transferase hmp2 catalyzes cis-trans isomerization of the 7',8' double bond with equilibrium favoring the trans isomer. The hpm6-encoded transporter might preferentially pump hypothemycin out of the cell relative to the trans isomer aigialomycin A. The cis-to-trans isomerization may be coupled with C-4' hydroxylation, since all known hypothemycin analogs containing the enone functional group also have hydroxyl groups at both C-4' and C-5'. This chain is Non-reducing polyketide synthase hmp3, found in Hypomyces subiculosus (Nectria subiculosa).